The primary structure comprises 1103 residues: Voltage-dependent calcium channel subunit alpha-2/delta-1 (1103 aa).

The first 24 residues, 1 to 24 (MAAGCLLALTLTLFQSLLIGPSSE), serve as a signal peptide directing secretion. Topologically, residues 25–1073 (EPFPSAVTIK…VLEDYTDCGG (1049 aa)) are extracellular. Asn-92 is a glycosylation site (N-linked (GlcNAc...) asparagine). Phosphoserine is present on Ser-119. N-linked (GlcNAc...) asparagine glycans are attached at residues Asn-136 and Asn-184. The VWFA domain maps to 253 to 430 (DMLILVDVSG…INTQEYLDVL (178 aa)). Asp-259, Ser-261, and Ser-263 together coordinate a divalent metal cation. Residues 259–263 (DVSGS) carry the MIDAS-like motif motif. 13 N-linked (GlcNAc...) asparagine glycosylation sites follow: Asn-324, Asn-348, Asn-468, Asn-475, Asn-604, Asn-613, Asn-675, Asn-781, Asn-824, Asn-888, Asn-895, Asn-985, and Asn-998. An intrachain disulfide couples Cys-404 to Cys-1059. The 111-residue stretch at 446 to 556 (WTNVYLDALE…NIQNPKSQEP (111 aa)) folds into the Cache domain. Residues 1074 to 1094 (VSGLNPSLWYIIGIQFLLLWL) form a helical membrane-spanning segment. Residues 1095–1103 (VSGSTHRLL) are Cytoplasmic-facing.

This sequence belongs to the calcium channel subunit alpha-2/delta family. Dimer formed of alpha-2-1 and delta-1 chains; disulfide-linked. Voltage-dependent calcium channels are multisubunit complexes, consisting of alpha-1 (CACNA1), alpha-2 (CACNA2D), beta (CACNB) and delta (CACNA2D) subunits in a 1:1:1:1 ratio. Proteolytically processed into subunits alpha-2-1 and delta-1 that are disulfide-linked. In terms of tissue distribution, isoform 1 is expressed in skeletal muscle. Isoform 2 is expressed in the central nervous system. Isoform 2, isoform 4 and isoform 5 are expressed in neuroblastoma cells. Isoform 3, isoform 4 and isoform 5 are expressed in the aorta.

Its subcellular location is the membrane. It is found in the cell membrane. Functionally, the alpha-2/delta subunit of voltage-dependent calcium channels regulates calcium current density and activation/inactivation kinetics of the calcium channel. Plays an important role in excitation-contraction coupling. This is Voltage-dependent calcium channel subunit alpha-2/delta-1 (CACNA2D1) from Homo sapiens (Human).